The following is a 469-amino-acid chain: Probable indole-3-acetic acid-amido synthetase GH3.13 (469 aa).

The tract at residues 1 to 26 is disordered; sequence MTSTSSENAPDHDHDHDASSPAPATA. Over residues 9-18 the composition is skewed to basic and acidic residues; the sequence is APDHDHDHDA.

This sequence belongs to the IAA-amido conjugating enzyme family.

In terms of biological role, may catalyze the synthesis of indole-3-acetic acid (IAA)-amino acid conjugates, providing a mechanism for the plant to cope with the presence of excess auxin. This chain is Probable indole-3-acetic acid-amido synthetase GH3.13 (GH3.13), found in Oryza sativa subsp. japonica (Rice).